The following is a 41-amino-acid chain: Plantazolicin (41 aa).

The propeptide occupies Met1–Ala27. N2,N2-dimethylarginine; in form plantazolicin A is present on Arg28. Positions Arg28–Cys29 form a cross-link, thiazole-4-carboxylic acid (Arg-Cys). Cross-links (5-methyloxazole-4-carboxylic acid (Cys-Thr)) lie at residues Cys29 to Thr30 and Cys31 to Thr32. The segment at residues Thr30 to Cys31 is a cross-link (thiazole-4-carboxylic acid (Thr-Cys)). A cross-link (5-methyloxazole-4-carboxylic acid (Thr-Thr)) is located at residues Thr32–Thr33. The segment at residues Ile35–Ser36 is a cross-link (oxazole-4-carboxylic acid (Ile-Ser)). 3 consecutive cross-links (oxazole-4-carboxylic acid (Ser-Ser)) follow at residues Ser36–Ser37, Ser37–Ser38, and Ser38–Ser39. Residues Ser39–Thr40 constitute a cross-link (5-methyloxazoline-4-carboxylic acid (Ser-Thr)).

In terms of processing, maturation of thiazole and oxazole containing antibiotics involves the enzymatic condensation of a Cys, Ser or Thr with the alpha-carbonyl of the preceding amino acid to form a thioether or ether bond, then dehydration to form a double bond with the alpha-amino nitrogen. Thiazoline or oxazoline ring are dehydrogenated to form thiazole or oxazole rings.

It localises to the secreted. The protein localises to the cell wall. Functionally, peptide antibiotic inhibiting growth of Gram-positive bacteria. The mode of action appears to be disruption of cell walls and lysis of cells. The protein is Plantazolicin of Bacillus pumilus (strain ATCC 7061 / DSM 27 / CCUG 26015 / JCM 2508 / NBRC 12092 / NCIMB 9369 / NCTC 10337 / NRRL NRS-272 / CCM 2144).